The chain runs to 546 residues: Cytochrome P450 monooxygenase alnH (546 aa).

Residues valine 11–isoleucine 31 traverse the membrane as a helical segment. 3 N-linked (GlcNAc...) asparagine glycosylation sites follow: asparagine 146, asparagine 258, and asparagine 425. A heme-binding site is contributed by cysteine 445.

It belongs to the cytochrome P450 family. Heme is required as a cofactor.

It localises to the membrane. It functions in the pathway polyketide biosynthesis. In terms of biological role, cytochrome P450 monooxygenase; part of the gene cluster that mediates the biosynthesis of asperlin, a polyketide showing anti-inflammatory, antitumor and antibiotic activities. The first step of the asperlin biosynthesis is the production of the intermediate 2,4,6-octatrienoic acid by the highly redusing polyketide synthase alnA with cleavage of the PKS product by the esterase alnB. 2,4,6-octatrienoic acid is further converted to asperlin via several steps involving the remaining enzymes from the cluster. The chain is Cytochrome P450 monooxygenase alnH from Emericella nidulans (strain FGSC A4 / ATCC 38163 / CBS 112.46 / NRRL 194 / M139) (Aspergillus nidulans).